The chain runs to 196 residues: MNDAINHTACETLFTQARTHNGWLDKPVSDAQLQAIWDLMKMGPTSANCSPARIVFVRSAEGKEKLGPTLSSGNLQKTMQAPVTAIVAWDRAFYDRLPTLFPHGDARSWFTSSPQLAEETAFRNSSLQAAYLIFACRALGLDTGPMSGFDREKVDAAFFADNGWKSNLLVNIGYGDPGKLYGRLPRLSFDEACLLA.

Belongs to the nitroreductase family. HadB/RutE subfamily. FMN serves as cofactor.

The enzyme catalyses 3-hydroxypropanoate + NADP(+) = 3-oxopropanoate + NADPH + H(+). In terms of biological role, may reduce toxic product malonic semialdehyde to 3-hydroxypropionic acid, which is excreted. The polypeptide is Probable malonic semialdehyde reductase RutE (Klebsiella pneumoniae (strain 342)).